Here is a 250-residue protein sequence, read N- to C-terminus: 5-oxoprolinase subunit A (250 aa).

It belongs to the LamB/PxpA family. Forms a complex composed of PxpA, PxpB and PxpC.

It carries out the reaction 5-oxo-L-proline + ATP + 2 H2O = L-glutamate + ADP + phosphate + H(+). Functionally, catalyzes the cleavage of 5-oxoproline to form L-glutamate coupled to the hydrolysis of ATP to ADP and inorganic phosphate. The chain is 5-oxoprolinase subunit A from Streptomyces griseus subsp. griseus (strain JCM 4626 / CBS 651.72 / NBRC 13350 / KCC S-0626 / ISP 5235).